Here is a 160-residue protein sequence, read N- to C-terminus: uncharacterized protein (160 aa).

The first 29 residues, 1 to 29 (MCGLGIVPMVKPALFGMLILVIGTSTVQA), serve as a signal peptide directing secretion.

This is an uncharacterized protein from Sinorhizobium fredii (strain NBRC 101917 / NGR234).